The following is a 440-amino-acid chain: Golgi reassembly-stacking protein 1 (440 aa).

Gly2 carries N-myristoyl glycine lipidation. 2 consecutive PDZ GRASP-type domains span residues 15-105 (EGFH…FCSF) and 111-199 (QVWH…YGYL). Residues 15 to 215 (EGFHLHGVQE…PPSYHKKPPG (201 aa)) are GRASP. 3 residues coordinate Zn(2+): His18, His20, and Cys103. Positions 190–202 (LGCGIGYGYLHRI) are essential for interaction with GOLGA2/GM130. 3 disordered regions span residues 205 to 248 (QPPS…ETGS), 261 to 301 (PGSS…PVQR), and 327 to 440 (LPSS…STTE). A compositionally biased stretch (pro residues) spans 214–239 (PGTPPPSALPLGAPPPDALPPGPTPE). Thr216 is modified (phosphothreonine). A compositionally biased stretch (low complexity) spans 327–336 (LPSSTELTTT). The span at 337 to 351 (AVSTSGPEDICSSSS) shows a compositional bias: polar residues. Residues Ser362, Ser364, and Ser373 each carry the phosphoserine modification.

Belongs to the GORASP family. In terms of assembly, homodimer. Forms higher-order oligomers under interphase but not mitotic conditions. Dimers of the protein on one membrane might be able to interact with dimers on another and so stack cisternae. Interacts with the C-terminus of GOLGA2/GM130 under both mitotic and non-mitotic conditions. The interaction is critical for the correct targeting of both proteins to the cis-Golgi. Interacts with TMED2 and TMED3. In terms of processing, phosphorylated by CDC2/B1 and PLK kinases during mitosis. Phosphorylation cycle correlates with the cisternal stacking cycle. Phosphorylation of the homodimer prevents the association of dimers into higher-order oligomers, leading to cisternal unstacking. Target for caspase-3 cleavage during apoptosis. The cleavage contributes to Golgi fragmentation and occurs very early in the execution phase of apoptosis. Post-translationally, myristoylated.

It localises to the golgi apparatus. Its subcellular location is the cis-Golgi network membrane. The protein localises to the endoplasmic reticulum-Golgi intermediate compartment membrane. In terms of biological role, key structural protein of the Golgi apparatus. The membrane cisternae of the Golgi apparatus adhere to each other to form stacks, which are aligned side by side to form the Golgi ribbon. Acting in concert with GORASP2/GRASP55, is required for the formation and maintenance of the Golgi ribbon, and may be dispensable for the formation of stacks. However, other studies suggest that GORASP1 plays an important role in assembly and membrane stacking of the cisternae, and in the reassembly of Golgi stacks after breakdown during mitosis. Caspase-mediated cleavage of GORASP1 is required for fragmentation of the Golgi during apoptosis. Also mediates, via its interaction with GOLGA2/GM130, the docking of transport vesicles with the Golgi membranes. Mediates ER stress-induced unconventional (ER/Golgi-independent) trafficking of core-glycosylated CFTR to cell membrane. The chain is Golgi reassembly-stacking protein 1 (GORASP1) from Homo sapiens (Human).